A 342-amino-acid polypeptide reads, in one-letter code: MLTERQLLVLHAIVDDYVRSAEPVGSRSISKREDIPYSPATIRNEMADLEELGFLEKPHSSAGRVPSQQGYRYYVDHLLSPHRLTVAERAGLSRLTTARLQAMEEVFQESARILSEMTSYVSIVLGPESINERLRHIQIIPMSNQKAVVILVSENGHVENRLVQVDENVTPSDLERTVNLLNERLVGTPLSSLQRKLNTELAQLFKAHINNYEHILHMLQQSMVPASGEKLFFSGKTNLMEQPEFQDVEKMRLLYKALEEENLLQKWLRAQQTDGLHVSIGQENELEAFESCSVITASYAIDGRHVGTLGVIGPTRMEYKRMIKVVDSLSKDLTKRLTGFER.

It belongs to the HrcA family.

Functionally, negative regulator of class I heat shock genes (grpE-dnaK-dnaJ and groELS operons). Prevents heat-shock induction of these operons. The protein is Heat-inducible transcription repressor HrcA of Shouchella clausii (strain KSM-K16) (Alkalihalobacillus clausii).